A 304-amino-acid polypeptide reads, in one-letter code: N-acetylglucosaminyl-phosphatidylinositol de-N-acetylase (304 aa).

Residues 1-20 are Lumenal-facing; that stretch reads MKMLRRTKVNFSKLLYKITK. A helical membrane pass occupies residues 21–38; the sequence is LAIVLTILYIYFTPKIVS. At 39 to 304 the chain is on the cytoplasmic side; sequence RNNASLQHIF…FVNEFDVYTY (266 aa).

Belongs to the PIGL family.

The protein resides in the endoplasmic reticulum membrane. It carries out the reaction a 6-(N-acetyl-alpha-D-glucosaminyl)-1-(1,2-diacyl-sn-glycero-3-phospho)-1D-myo-inositol + H2O = a 6-(alpha-D-glucosaminyl)-1-(1,2-diacyl-sn-glycero-3-phospho)-1D-myo-inositol + acetate. It functions in the pathway glycolipid biosynthesis; glycosylphosphatidylinositol-anchor biosynthesis. Its function is as follows. Involved in the second step of GPI biosynthesis. De-N-acetylation of N-acetylglucosaminyl-phosphatidylinositol. This is N-acetylglucosaminyl-phosphatidylinositol de-N-acetylase (GPI12) from Saccharomyces cerevisiae (strain ATCC 204508 / S288c) (Baker's yeast).